A 595-amino-acid polypeptide reads, in one-letter code: DNA primase (595 aa).

The CHC2-type zinc finger occupies 38–62 (CPFHDEKTPSFIVYPTRGHYHCYGC). The Toprim domain maps to 251–331 (RRVILVEGQA…GITAIVCRLP (81 aa)). Mg(2+) contacts are provided by E257, D302, and D304. Positions 430-441 (KGKKVSAKEPSS) are enriched in basic and acidic residues. The segment at 430–451 (KGKKVSAKEPSSESKQTSTEGK) is disordered.

Belongs to the DnaG primase family. Monomer. Interacts with DnaB. Zn(2+) serves as cofactor. The cofactor is Mg(2+).

The catalysed reaction is ssDNA + n NTP = ssDNA/pppN(pN)n-1 hybrid + (n-1) diphosphate.. Its function is as follows. RNA polymerase that catalyzes the synthesis of short RNA molecules used as primers for DNA polymerase during DNA replication. This chain is DNA primase, found in Chlamydia trachomatis serovar D (strain ATCC VR-885 / DSM 19411 / UW-3/Cx).